A 527-amino-acid polypeptide reads, in one-letter code: GMP synthase [glutamine-hydrolyzing] (527 aa).

The Glutamine amidotransferase type-1 domain occupies 20–208 (SVVILDYGSQ…LFDVCGCAPT (189 aa)). Cysteine 97 (nucleophile) is an active-site residue. Active-site residues include histidine 182 and glutamate 184. Positions 209–402 (WTAESFVEQA…LGLPEEIVQR (194 aa)) constitute a GMPS ATP-PPase domain. 236-242 (SGGVDSS) is a binding site for ATP.

Homodimer.

The enzyme catalyses XMP + L-glutamine + ATP + H2O = GMP + L-glutamate + AMP + diphosphate + 2 H(+). It functions in the pathway purine metabolism; GMP biosynthesis; GMP from XMP (L-Gln route): step 1/1. In terms of biological role, catalyzes the synthesis of GMP from XMP. This is GMP synthase [glutamine-hydrolyzing] from Thermomicrobium roseum (strain ATCC 27502 / DSM 5159 / P-2).